Consider the following 648-residue polypeptide: Biosynthetic arginine decarboxylase (648 aa).

Lys-109 bears the N6-(pyridoxal phosphate)lysine mark. 291 to 301 (IDVGGGLGIDF) contributes to the substrate binding site.

The protein belongs to the Orn/Lys/Arg decarboxylase class-II family. SpeA subfamily. It depends on Mg(2+) as a cofactor. Requires pyridoxal 5'-phosphate as cofactor.

The catalysed reaction is L-arginine + H(+) = agmatine + CO2. The protein operates within amine and polyamine biosynthesis; agmatine biosynthesis; agmatine from L-arginine: step 1/1. Catalyzes the biosynthesis of agmatine from arginine. This is Biosynthetic arginine decarboxylase from Prochlorococcus marinus (strain MIT 9301).